The sequence spans 565 residues: Transcription factor asqA (565 aa).

Residues 204–273 (MDTAMAQAVR…HSMPALCIDS (70 aa)) form a fungal transcription factor domain region.

It is found in the nucleus. Transcription factor that regulates specifically the 4'-methoxyviridicatin/aspoquinolone biosynthesis cluster. This Emericella nidulans (strain FGSC A4 / ATCC 38163 / CBS 112.46 / NRRL 194 / M139) (Aspergillus nidulans) protein is Transcription factor asqA.